Here is a 334-residue protein sequence, read N- to C-terminus: Eukaryotic translation initiation factor 3 subunit H (334 aa).

In terms of domain architecture, MPN spans 21 to 155 (VQIDGLVVLK…LKAYRLTPKL (135 aa)). The interval 247–284 (RNVGKQQQQKHQYTQRKQQENLQRLSRGETPLPEEDVN) is disordered. Residues 251–262 (KQQQQKHQYTQR) are compositionally biased toward low complexity.

It belongs to the eIF-3 subunit H family. As to quaternary structure, component of the eukaryotic translation initiation factor 3 (eIF-3) complex, which is composed of 13 subunits: eif3a, eif3b, eif3c, eif3d, eif3e, eif3f, eif3g, eif3h, eif3i, eif3j, eif3k, eif3l and eif3m.

Its subcellular location is the cytoplasm. Its function is as follows. Component of the eukaryotic translation initiation factor 3 (eIF-3) complex, which is involved in protein synthesis of a specialized repertoire of mRNAs and, together with other initiation factors, stimulates binding of mRNA and methionyl-tRNAi to the 40S ribosome. The eIF-3 complex specifically targets and initiates translation of a subset of mRNAs involved in cell proliferation. The chain is Eukaryotic translation initiation factor 3 subunit H (eif3h) from Xenopus laevis (African clawed frog).